Consider the following 212-residue polypeptide: ATP phosphoribosyltransferase (212 aa).

The protein belongs to the ATP phosphoribosyltransferase family. Short subfamily. As to quaternary structure, heteromultimer composed of HisG and HisZ subunits.

It localises to the cytoplasm. It carries out the reaction 1-(5-phospho-beta-D-ribosyl)-ATP + diphosphate = 5-phospho-alpha-D-ribose 1-diphosphate + ATP. Its pathway is amino-acid biosynthesis; L-histidine biosynthesis; L-histidine from 5-phospho-alpha-D-ribose 1-diphosphate: step 1/9. In terms of biological role, catalyzes the condensation of ATP and 5-phosphoribose 1-diphosphate to form N'-(5'-phosphoribosyl)-ATP (PR-ATP). Has a crucial role in the pathway because the rate of histidine biosynthesis seems to be controlled primarily by regulation of HisG enzymatic activity. The protein is ATP phosphoribosyltransferase of Clostridium botulinum (strain ATCC 19397 / Type A).